Here is a 311-residue protein sequence, read N- to C-terminus: Aspartate carbamoyltransferase catalytic subunit (311 aa).

Carbamoyl phosphate contacts are provided by R55 and T56. K85 provides a ligand contact to L-aspartate. Carbamoyl phosphate is bound by residues R106, H135, and Q138. L-aspartate-binding residues include R168 and R230. The carbamoyl phosphate site is built by L268 and P269.

It belongs to the aspartate/ornithine carbamoyltransferase superfamily. ATCase family. In terms of assembly, heterododecamer (2C3:3R2) of six catalytic PyrB chains organized as two trimers (C3), and six regulatory PyrI chains organized as three dimers (R2).

The catalysed reaction is carbamoyl phosphate + L-aspartate = N-carbamoyl-L-aspartate + phosphate + H(+). It functions in the pathway pyrimidine metabolism; UMP biosynthesis via de novo pathway; (S)-dihydroorotate from bicarbonate: step 2/3. Its function is as follows. Catalyzes the condensation of carbamoyl phosphate and aspartate to form carbamoyl aspartate and inorganic phosphate, the committed step in the de novo pyrimidine nucleotide biosynthesis pathway. In Escherichia coli O139:H28 (strain E24377A / ETEC), this protein is Aspartate carbamoyltransferase catalytic subunit.